A 244-amino-acid polypeptide reads, in one-letter code: 1-(5-phosphoribosyl)-5-[(5-phosphoribosylamino)methylideneamino] imidazole-4-carboxamide isomerase (244 aa).

Asp-12 (proton acceptor) is an active-site residue. The active-site Proton donor is the Asp-131.

It belongs to the HisA/HisF family.

It localises to the cytoplasm. The enzyme catalyses 1-(5-phospho-beta-D-ribosyl)-5-[(5-phospho-beta-D-ribosylamino)methylideneamino]imidazole-4-carboxamide = 5-[(5-phospho-1-deoxy-D-ribulos-1-ylimino)methylamino]-1-(5-phospho-beta-D-ribosyl)imidazole-4-carboxamide. It functions in the pathway amino-acid biosynthesis; L-histidine biosynthesis; L-histidine from 5-phospho-alpha-D-ribose 1-diphosphate: step 4/9. The protein is 1-(5-phosphoribosyl)-5-[(5-phosphoribosylamino)methylideneamino] imidazole-4-carboxamide isomerase of Nocardioides sp. (strain ATCC BAA-499 / JS614).